We begin with the raw amino-acid sequence, 136 residues long: Large ribosomal subunit protein uL16c (136 aa).

The disordered stretch occupies residues 1–20 (MLSPKRTRFRKQHRGRMKGK).

The protein belongs to the universal ribosomal protein uL16 family. As to quaternary structure, part of the 50S ribosomal subunit.

It localises to the plastid. Its subcellular location is the chloroplast. The sequence is that of Large ribosomal subunit protein uL16c from Agrostis stolonifera (Creeping bentgrass).